A 330-amino-acid polypeptide reads, in one-letter code: Malate dehydrogenase (330 aa).

Residue 12-18 coordinates NAD(+); that stretch reads GAAGQIG. Positions 93 and 99 each coordinate substrate. Residues N106, Q113, and 130–132 contribute to the NAD(+) site; that span reads VGN. N132 and R166 together coordinate substrate. The active-site Proton acceptor is H191.

This sequence belongs to the LDH/MDH superfamily. MDH type 2 family.

It catalyses the reaction (S)-malate + NAD(+) = oxaloacetate + NADH + H(+). Catalyzes the reversible oxidation of malate to oxaloacetate. The chain is Malate dehydrogenase from Azoarcus sp. (strain BH72).